Reading from the N-terminus, the 203-residue chain is Small ribosomal subunit protein uS4 (203 aa).

The S4 RNA-binding domain occupies 93–153 (QRLDSLVYRL…DKSKNIVPIQ (61 aa)).

This sequence belongs to the universal ribosomal protein uS4 family. Part of the 30S ribosomal subunit. Contacts protein S5. The interaction surface between S4 and S5 is involved in control of translational fidelity.

Functionally, one of the primary rRNA binding proteins, it binds directly to 16S rRNA where it nucleates assembly of the body of the 30S subunit. In terms of biological role, with S5 and S12 plays an important role in translational accuracy. The chain is Small ribosomal subunit protein uS4 from Leuconostoc citreum (strain KM20).